Reading from the N-terminus, the 228-residue chain is Octanoyltransferase (228 aa).

Positions 30 to 214 constitute a BPL/LPL catalytic domain; that stretch reads KKIGDTLLLL…YFGKVFGKSL (185 aa). Substrate is bound by residues 75–82, 144–146, and 157–159; these read RGGDVTYH, AIG, and GFA. The active-site Acyl-thioester intermediate is the Cys175.

It belongs to the LipB family.

The protein resides in the cytoplasm. The enzyme catalyses octanoyl-[ACP] + L-lysyl-[protein] = N(6)-octanoyl-L-lysyl-[protein] + holo-[ACP] + H(+). It functions in the pathway protein modification; protein lipoylation via endogenous pathway; protein N(6)-(lipoyl)lysine from octanoyl-[acyl-carrier-protein]: step 1/2. Its function is as follows. Catalyzes the transfer of endogenously produced octanoic acid from octanoyl-acyl-carrier-protein onto the lipoyl domains of lipoate-dependent enzymes. Lipoyl-ACP can also act as a substrate although octanoyl-ACP is likely to be the physiological substrate. The protein is Octanoyltransferase of Caldicellulosiruptor bescii (strain ATCC BAA-1888 / DSM 6725 / KCTC 15123 / Z-1320) (Anaerocellum thermophilum).